A 1414-amino-acid polypeptide reads, in one-letter code: DNA-directed RNA polymerase subunit beta' (1414 aa).

Zn(2+)-binding residues include Cys70, Cys72, Cys85, and Cys88. Mg(2+) contacts are provided by Asp460, Asp462, and Asp464. Positions 815, 889, 896, and 899 each coordinate Zn(2+). The segment at 1395 to 1414 (EAEAQFADVSSTPDSDTDAS) is disordered.

It belongs to the RNA polymerase beta' chain family. As to quaternary structure, the RNAP catalytic core consists of 2 alpha, 1 beta, 1 beta' and 1 omega subunit. When a sigma factor is associated with the core the holoenzyme is formed, which can initiate transcription. Mg(2+) serves as cofactor. The cofactor is Zn(2+).

It catalyses the reaction RNA(n) + a ribonucleoside 5'-triphosphate = RNA(n+1) + diphosphate. DNA-dependent RNA polymerase catalyzes the transcription of DNA into RNA using the four ribonucleoside triphosphates as substrates. The polypeptide is DNA-directed RNA polymerase subunit beta' (Janthinobacterium sp. (strain Marseille) (Minibacterium massiliensis)).